Consider the following 356-residue polypeptide: Chorismate synthase (356 aa).

Arg-48 and Arg-54 together coordinate NADP(+). Residues 125 to 127 (RSS), 237 to 238 (NA), Gly-281, 296 to 300 (KPTSS), and Arg-322 each bind FMN.

Belongs to the chorismate synthase family. Homotetramer. FMNH2 serves as cofactor.

It carries out the reaction 5-O-(1-carboxyvinyl)-3-phosphoshikimate = chorismate + phosphate. It functions in the pathway metabolic intermediate biosynthesis; chorismate biosynthesis; chorismate from D-erythrose 4-phosphate and phosphoenolpyruvate: step 7/7. Its function is as follows. Catalyzes the anti-1,4-elimination of the C-3 phosphate and the C-6 proR hydrogen from 5-enolpyruvylshikimate-3-phosphate (EPSP) to yield chorismate, which is the branch point compound that serves as the starting substrate for the three terminal pathways of aromatic amino acid biosynthesis. This reaction introduces a second double bond into the aromatic ring system. This is Chorismate synthase from Novosphingobium aromaticivorans (strain ATCC 700278 / DSM 12444 / CCUG 56034 / CIP 105152 / NBRC 16084 / F199).